Here is a 464-residue protein sequence, read N- to C-terminus: Cell division protein FtsA (464 aa).

The disordered stretch occupies residues glutamate 392–glutamate 464. Over residues lysine 416–phenylalanine 455 the composition is skewed to basic and acidic residues.

This sequence belongs to the FtsA/MreB family. As to quaternary structure, self-interacts. Interacts with FtsZ.

It is found in the cell membrane. Cell division protein that is involved in the assembly of the Z ring. May serve as a membrane anchor for the Z ring. This chain is Cell division protein FtsA, found in Staphylococcus epidermidis (strain ATCC 12228 / FDA PCI 1200).